A 441-amino-acid polypeptide reads, in one-letter code: Homogentisate 1,2-dioxygenase (441 aa).

Histidine 297 (proton acceptor) is an active-site residue. The Fe cation site is built by histidine 340 and glutamate 346. The homogentisate site is built by tyrosine 355 and histidine 376. Histidine 376 lines the Fe cation pocket.

This sequence belongs to the homogentisate dioxygenase family. As to quaternary structure, hexamer; dimer of trimers. Fe cation is required as a cofactor.

It carries out the reaction homogentisate + O2 = 4-maleylacetoacetate + H(+). Its pathway is amino-acid degradation; L-phenylalanine degradation; acetoacetate and fumarate from L-phenylalanine: step 4/6. Functionally, involved in the catabolism of homogentisate (2,5-dihydroxyphenylacetate or 2,5-OH-PhAc), a central intermediate in the degradation of phenylalanine and tyrosine. Catalyzes the oxidative ring cleavage of the aromatic ring of homogentisate to yield maleylacetoacetate. This Streptomyces coelicolor (strain ATCC BAA-471 / A3(2) / M145) protein is Homogentisate 1,2-dioxygenase.